The chain runs to 160 residues: 3-hydroxyacyl-[acyl-carrier-protein] dehydratase FabZ (160 aa).

His-63 is a catalytic residue.

It belongs to the thioester dehydratase family. FabZ subfamily.

It is found in the cytoplasm. The enzyme catalyses a (3R)-hydroxyacyl-[ACP] = a (2E)-enoyl-[ACP] + H2O. In terms of biological role, involved in unsaturated fatty acids biosynthesis. Catalyzes the dehydration of short chain beta-hydroxyacyl-ACPs and long chain saturated and unsaturated beta-hydroxyacyl-ACPs. The protein is 3-hydroxyacyl-[acyl-carrier-protein] dehydratase FabZ of Xylella fastidiosa (strain 9a5c).